The following is a 249-amino-acid chain: Enolase-phosphatase E1 (249 aa).

Residues D15 and E17 each coordinate Mg(2+). Substrate-binding positions include 146-147 (SS) and K180. D205 contributes to the Mg(2+) binding site.

Belongs to the HAD-like hydrolase superfamily. MasA/MtnC family. Monomer. The cofactor is Mg(2+).

Its subcellular location is the cytoplasm. The protein localises to the nucleus. It catalyses the reaction 5-methylsulfanyl-2,3-dioxopentyl phosphate + H2O = 1,2-dihydroxy-5-(methylsulfanyl)pent-1-en-3-one + phosphate. It functions in the pathway amino-acid biosynthesis; L-methionine biosynthesis via salvage pathway; L-methionine from S-methyl-5-thio-alpha-D-ribose 1-phosphate: step 3/6. Its pathway is amino-acid biosynthesis; L-methionine biosynthesis via salvage pathway; L-methionine from S-methyl-5-thio-alpha-D-ribose 1-phosphate: step 4/6. Its function is as follows. Bifunctional enzyme that catalyzes the enolization of 2,3-diketo-5-methylthiopentyl-1-phosphate (DK-MTP-1-P) into the intermediate 2-hydroxy-3-keto-5-methylthiopentenyl-1-phosphate (HK-MTPenyl-1-P), which is then dephosphorylated to form the acireductone 1,2-dihydroxy-3-keto-5-methylthiopentene (DHK-MTPene). This is Enolase-phosphatase E1 from Caenorhabditis briggsae.